The following is a 511-amino-acid chain: Ribonuclease Y (511 aa).

The helical transmembrane segment at 3 to 23 threads the bilayer; sequence VGILIGIIILGVVGFIQYTLI. A KH domain is found at 201-286; it reads TVHVVALPND…EMVERAIKDV (86 aa). An HD domain is found at 327 to 420; it reads VLKHSIEVSY…VQAADAISAA (94 aa).

It belongs to the RNase Y family.

The protein resides in the cell membrane. Its function is as follows. Endoribonuclease that initiates mRNA decay. This Clostridium perfringens (strain ATCC 13124 / DSM 756 / JCM 1290 / NCIMB 6125 / NCTC 8237 / Type A) protein is Ribonuclease Y.